Consider the following 105-residue polypeptide: Large ribosomal subunit protein uL24 (105 aa).

The protein belongs to the universal ribosomal protein uL24 family. Part of the 50S ribosomal subunit.

In terms of biological role, one of two assembly initiator proteins, it binds directly to the 5'-end of the 23S rRNA, where it nucleates assembly of the 50S subunit. Its function is as follows. One of the proteins that surrounds the polypeptide exit tunnel on the outside of the subunit. This Xanthomonas oryzae pv. oryzae (strain PXO99A) protein is Large ribosomal subunit protein uL24.